The sequence spans 450 residues: tRNA-2-methylthio-N(6)-dimethylallyladenosine synthase (450 aa).

One can recognise an MTTase N-terminal domain in the interval Lys-3 to Arg-118. Cys-12, Cys-49, Cys-81, Cys-155, Cys-159, and Cys-162 together coordinate [4Fe-4S] cluster. In terms of domain architecture, Radical SAM core spans Ser-141–Ser-376. Positions Ala-377–Ala-440 constitute a TRAM domain.

The protein belongs to the methylthiotransferase family. MiaB subfamily. Monomer. Requires [4Fe-4S] cluster as cofactor.

It localises to the cytoplasm. It carries out the reaction N(6)-dimethylallyladenosine(37) in tRNA + (sulfur carrier)-SH + AH2 + 2 S-adenosyl-L-methionine = 2-methylsulfanyl-N(6)-dimethylallyladenosine(37) in tRNA + (sulfur carrier)-H + 5'-deoxyadenosine + L-methionine + A + S-adenosyl-L-homocysteine + 2 H(+). Its function is as follows. Catalyzes the methylthiolation of N6-(dimethylallyl)adenosine (i(6)A), leading to the formation of 2-methylthio-N6-(dimethylallyl)adenosine (ms(2)i(6)A) at position 37 in tRNAs that read codons beginning with uridine. This Verminephrobacter eiseniae (strain EF01-2) protein is tRNA-2-methylthio-N(6)-dimethylallyladenosine synthase.